The chain runs to 262 residues: tRNA pseudouridine synthase A (262 aa).

Catalysis depends on Asp51, which acts as the Nucleophile. Tyr109 contacts substrate.

It belongs to the tRNA pseudouridine synthase TruA family. As to quaternary structure, homodimer.

The catalysed reaction is uridine(38/39/40) in tRNA = pseudouridine(38/39/40) in tRNA. Functionally, formation of pseudouridine at positions 38, 39 and 40 in the anticodon stem and loop of transfer RNAs. The protein is tRNA pseudouridine synthase A of Actinobacillus pleuropneumoniae serotype 3 (strain JL03).